A 106-amino-acid polypeptide reads, in one-letter code: Large ribosomal subunit protein eL30 (106 aa).

This sequence belongs to the eukaryotic ribosomal protein eL30 family.

This is Large ribosomal subunit protein eL30 from Methanococcus maripaludis (strain C5 / ATCC BAA-1333).